Reading from the N-terminus, the 142-residue chain is Large ribosomal subunit protein bL17 (142 aa).

Belongs to the bacterial ribosomal protein bL17 family. In terms of assembly, part of the 50S ribosomal subunit. Contacts protein L32.

This chain is Large ribosomal subunit protein bL17, found in Brucella abortus (strain S19).